Consider the following 259-residue polypeptide: Proteasome subunit alpha type-7 (259 aa).

The protein belongs to the peptidase T1A family. As to quaternary structure, the 26S proteasome consists of a 20S proteasome core and two 19S regulatory subunits. The 20S proteasome core is composed of 28 subunits that are arranged in four stacked rings, resulting in a barrel-shaped structure. The two end rings are each formed by seven alpha subunits, and the two central rings are each formed by seven beta subunits. The catalytic chamber with the active sites is on the inside of the barrel.

The protein resides in the cytoplasm. It localises to the nucleus. Functionally, the proteasome is a multicatalytic proteinase complex which is characterized by its ability to cleave peptides with Arg, Phe, Tyr, Leu, and Glu adjacent to the leaving group at neutral or slightly basic pH. The proteasome has an ATP-dependent proteolytic activity. The polypeptide is Proteasome subunit alpha type-7 (PAD1) (Solanum lycopersicum (Tomato)).